We begin with the raw amino-acid sequence, 607 residues long: Leucine-rich repeat-containing protein 63 (607 aa).

LRR repeat units follow at residues 357–378 (QLVYLNLSYNDLHQFPGEVLYL), 380–401 (NLQVLKLRNNPIREIPSEIQQL), 403–424 (YLRKFTIAFNFITSLPAGLFCL), 426–447 (YLEELDVSYNEIENIPNEIQKL), 449–470 (SLEKLTVDGTNITAFPPGILKL), 471–497 (NLVKLEFENTFTIPPFWLENSCNNPPR), and 498–524 (LTHICSLFIVKNNLHKILDYDPVVVQK).

This is Leucine-rich repeat-containing protein 63 (Lrrc63) from Rattus norvegicus (Rat).